Here is a 98-residue protein sequence, read N- to C-terminus: Small ribosomal subunit protein uS19 (98 aa).

Positions 77-98 (TRTFRGHAGGKAEKGGSAPKKK) are disordered.

This sequence belongs to the universal ribosomal protein uS19 family.

Protein S19 forms a complex with S13 that binds strongly to the 16S ribosomal RNA. This chain is Small ribosomal subunit protein uS19, found in Chlorobium phaeobacteroides (strain DSM 266 / SMG 266 / 2430).